Here is a 422-residue protein sequence, read N- to C-terminus: MEYLKIVGGKDISGSVEISGAKNAALPLIACTILGKNEITIGNLPNVVDINTFLKLILKLGGSFVKEENKVKINTSTINNTTATYDIVKTMRASILVLGPLLARFGHCEVSLPGGCAIGQRPVDLHLKALEQMGAKIEILQGYIKATAPNGLKGAKIVFDKVTVGGTENIVMAAALAHGVTTIINAAKEPEIVQLCEVLANSGVKIEGIGTSKIVIEGTGQKLIDIKPFDVIPDRIEAGTYMCAAAITNKKLKINKVIPLHLEAVISKLEEMNFEVLQDENSVTILPTNEIKPVNIITTEYPGFPTDMQAQFMALATQANGTSTIDERLFENRFMHVSELLRLGADIHLNGNIATINGKMGSLNGTDVMATDLRASSALVLAALVANGETNIHRIYHLDRGYENLEGKLSLIGADVKRSKED.

22-23 (KN) serves as a coordination point for phosphoenolpyruvate. Arg92 contacts UDP-N-acetyl-alpha-D-glucosamine. The Proton donor role is filled by Cys116. Cys116 is modified (2-(S-cysteinyl)pyruvic acid O-phosphothioketal). UDP-N-acetyl-alpha-D-glucosamine is bound by residues 121-125 (RPVDL), Asp307, and Leu329.

It belongs to the EPSP synthase family. MurA subfamily.

It localises to the cytoplasm. The enzyme catalyses phosphoenolpyruvate + UDP-N-acetyl-alpha-D-glucosamine = UDP-N-acetyl-3-O-(1-carboxyvinyl)-alpha-D-glucosamine + phosphate. It functions in the pathway cell wall biogenesis; peptidoglycan biosynthesis. Its function is as follows. Cell wall formation. Adds enolpyruvyl to UDP-N-acetylglucosamine. This chain is UDP-N-acetylglucosamine 1-carboxyvinyltransferase, found in Aliarcobacter butzleri (strain RM4018) (Arcobacter butzleri).